The following is a 561-amino-acid chain: Proline--tRNA ligase (561 aa).

The protein belongs to the class-II aminoacyl-tRNA synthetase family. ProS type 1 subfamily. Homodimer.

It localises to the cytoplasm. It catalyses the reaction tRNA(Pro) + L-proline + ATP = L-prolyl-tRNA(Pro) + AMP + diphosphate. Its function is as follows. Catalyzes the attachment of proline to tRNA(Pro) in a two-step reaction: proline is first activated by ATP to form Pro-AMP and then transferred to the acceptor end of tRNA(Pro). As ProRS can inadvertently accommodate and process non-cognate amino acids such as alanine and cysteine, to avoid such errors it has two additional distinct editing activities against alanine. One activity is designated as 'pretransfer' editing and involves the tRNA(Pro)-independent hydrolysis of activated Ala-AMP. The other activity is designated 'posttransfer' editing and involves deacylation of mischarged Ala-tRNA(Pro). The misacylated Cys-tRNA(Pro) is not edited by ProRS. The protein is Proline--tRNA ligase of Wigglesworthia glossinidia brevipalpis.